Here is a 451-residue protein sequence, read N- to C-terminus: Epi-neemfruitin B 7-O-acetyltransferse L7AT (451 aa).

Catalysis depends on proton acceptor residues His-165 and Asp-384.

The protein belongs to the plant acyltransferase family. In terms of assembly, monomer. As to expression, mainly expressed in petioles and, to a lower extent, in roots.

It catalyses the reaction epi-neemfruitin B + acetyl-CoA = 7-acetyl-epi-neemfruitin B + CoA. The protein operates within secondary metabolite biosynthesis; terpenoid biosynthesis. Functionally, acetyltransferase involved in the biosynthesis of limonoids triterpene natural products such as azadirachtin, an antifeedant widely used as bioinsecticide, and possessing many medicinal applications including anti-tumoral, anti-malarial, anti-rheumatic, antibacterial, anti-inflammatory, anti-pyretic and diuretic effects. Catalyzes the formation of 7-acetyl-epi-neemfruitin B from epi-neemfruitin B. The chain is Epi-neemfruitin B 7-O-acetyltransferse L7AT from Melia azedarach (Chinaberry tree).